The chain runs to 189 residues: Adenylate kinase (189 aa).

An ATP-binding site is contributed by 11 to 16; sequence GSGKGT. The tract at residues 31 to 60 is NMP; sequence STGDVLRAEIKKGTELGKTAKGYIDQGQLL. Residues threonine 32, arginine 37, 58–60, 86–89, and glutamine 93 each bind AMP; these read QLL and GFPR. The tract at residues 127–137 is LID; the sequence is KRGQESGRADD. An ATP-binding site is contributed by arginine 128. Arginine 134 and arginine 145 together coordinate AMP. Glycine 173 contacts ATP.

Belongs to the adenylate kinase family. Monomer.

It localises to the cytoplasm. The enzyme catalyses AMP + ATP = 2 ADP. The protein operates within purine metabolism; AMP biosynthesis via salvage pathway; AMP from ADP: step 1/1. In terms of biological role, catalyzes the reversible transfer of the terminal phosphate group between ATP and AMP. Plays an important role in cellular energy homeostasis and in adenine nucleotide metabolism. The protein is Adenylate kinase of Phocaeicola vulgatus (strain ATCC 8482 / DSM 1447 / JCM 5826 / CCUG 4940 / NBRC 14291 / NCTC 11154) (Bacteroides vulgatus).